Consider the following 588-residue polypeptide: Protein decapentaplegic (588 aa).

The N-terminal stretch at 1 to 23 (MRAWLLLLAVLATFQTIVRVAST) is a signal peptide. Residues 24-456 (EDISQRFIAA…DGRHKARSIR (433 aa)) constitute a propeptide that is removed on maturation. Residues 74–169 (FSEPASFSDS…STESHQSSSI (96 aa)) are disordered. Basic and acidic residues predominate over residues 96–119 (SKSDANRQFNEVHKPRTDQLENSK). The N-linked (GlcNAc...) asparagine glycan is linked to N120. Residues 140–153 (RSHHKKSHHHRSHQ) are compositionally biased toward basic residues. Positions 156–169 (QASASTESHQSSSI) are enriched in low complexity. N342 and N377 each carry an N-linked (GlcNAc...) asparagine glycan. Positions 454–484 (SIRDVSGGEGGGKGGRNKRQPRRPTRRKNHD) are disordered. Residues 468–481 (GRNKRQPRRPTRRK) show a composition bias toward basic residues. Disulfide bonds link C487-C553, C516-C585, and C520-C587. The N-linked (GlcNAc...) asparagine glycan is linked to N529.

This sequence belongs to the TGF-beta family. Heterodimers of scw/dpp are the active subunit, dpp/dpp homodimers elicit a basal response and scw/scw homodimers alone are ineffective in specifying a dorsal pattern. Component of a complex composed of dpp, sog and tsg. Interacts with nord and gbb; the interaction interferes with dpp secretion. As to expression, expressed in the dorsal region of the embryo, and becomes enriched in a dorsal midline stripe just prior to gastrulation. Expressed in midgut mesoderm and in two overlapping regions of the embryonic large intestine. Expressed in a long-range concentration gradient in the wing imaginal disk.

Its subcellular location is the secreted. Required during oogenesis for eggshell patterning and dorsal/ventral patterning of the embryo. Acts as a morphogen during embryogenesis to pattern the dorsal/ventral axis, specifying dorsal ectoderm and amnioserosa cell fate within the dorsal half of the embryo; this activity is antagonized by binding to sog and tsg. Induces the formation of visceral mesoderm and the heart in early embryos. Required later in embryogenesis for dorsal closure and patterning of the hindgut. Also functions postembryonically as a long-range morphogen during imaginal disk development; is responsible for the progression of the morphogenetic furrow during eye development. Patterns the wing imaginal disk along its anterior/posterior axis and has a role in positioning pro-veins. Also required to subdivide the wing disk along the proximal/distal axis into body wall (notum) and wing. Ensures the correct architecture of wing epithelial cells. Has multiple roles in the developing tracheal system, controlling directed tracheal cell migration during embryogenesis and later specifying the fate of fusion cells in the tracheal branches. Required for viability of larvae. Essential for the maintenance and division of germline stem cells in the ovary. Signals via the type I receptor tkv, the type II receptor punt, and in some tissues via the type I receptor sax, in a signaling cascade that leads to activation and repression of target genes. This is Protein decapentaplegic (dpp) from Drosophila melanogaster (Fruit fly).